Reading from the N-terminus, the 268-residue chain is Taurine import ATP-binding protein TauB (268 aa).

In terms of domain architecture, ABC transporter spans 4–236; that stretch reads LAIRNISMRF…EGVDADLREV (233 aa). 41–48 lines the ATP pocket; the sequence is GPSGCGKT.

The protein belongs to the ABC transporter superfamily. Taurine importer (TC 3.A.1.17.1) family. As to quaternary structure, the complex is composed of two ATP-binding proteins (TauB), two transmembrane proteins (TauC) and a solute-binding protein (TauA).

The protein localises to the cell inner membrane. The catalysed reaction is taurine(out) + ATP + H2O = taurine(in) + ADP + phosphate + H(+). Functionally, part of the ABC transporter complex TauABC involved in taurine import. Responsible for energy coupling to the transport system. This Jannaschia sp. (strain CCS1) protein is Taurine import ATP-binding protein TauB.